Consider the following 164-residue polypeptide: UPF0114 protein YqhA (164 aa).

3 helical membrane passes run Y10 to L32, L53 to F75, and L136 to Y155.

The protein belongs to the UPF0114 family.

Its subcellular location is the cell membrane. The polypeptide is UPF0114 protein YqhA (Salmonella typhi).